The chain runs to 228 residues: NOI-like protein (228 aa).

Over residues 56–75 (AQDHQHSEKHHNDTSTDYHV) the composition is skewed to basic and acidic residues. 2 disordered regions span residues 56–87 (AQDH…HRRE) and 99–133 (RPHR…RNSD). Basic residues predominate over residues 76-86 (VKQHRRKHHRR). The segment covering 118-133 (HGTSATMSSSVKRNSD) has biased composition (polar residues).

This sequence belongs to the RIN4 family.

The chain is NOI-like protein from Elaeis oleifera (American oil palm).